The primary structure comprises 167 residues: Crossover junction endodeoxyribonuclease RuvC (167 aa).

Active-site residues include D11, E71, and D143. Positions 11, 71, and 143 each coordinate Mg(2+).

The protein belongs to the RuvC family. Homodimer which binds Holliday junction (HJ) DNA. The HJ becomes 2-fold symmetrical on binding to RuvC with unstacked arms; it has a different conformation from HJ DNA in complex with RuvA. In the full resolvosome a probable DNA-RuvA(4)-RuvB(12)-RuvC(2) complex forms which resolves the HJ. Mg(2+) is required as a cofactor.

Its subcellular location is the cytoplasm. The enzyme catalyses Endonucleolytic cleavage at a junction such as a reciprocal single-stranded crossover between two homologous DNA duplexes (Holliday junction).. In terms of biological role, the RuvA-RuvB-RuvC complex processes Holliday junction (HJ) DNA during genetic recombination and DNA repair. Endonuclease that resolves HJ intermediates. Cleaves cruciform DNA by making single-stranded nicks across the HJ at symmetrical positions within the homologous arms, yielding a 5'-phosphate and a 3'-hydroxyl group; requires a central core of homology in the junction. The consensus cleavage sequence is 5'-(A/T)TT(C/G)-3'. Cleavage occurs on the 3'-side of the TT dinucleotide at the point of strand exchange. HJ branch migration catalyzed by RuvA-RuvB allows RuvC to scan DNA until it finds its consensus sequence, where it cleaves and resolves the cruciform DNA. This is Crossover junction endodeoxyribonuclease RuvC from Acidiphilium cryptum (strain JF-5).